A 344-amino-acid chain; its full sequence is Dihydroorotase (344 aa).

Zn(2+)-binding residues include H13 and H15. Substrate-binding positions include H15–R17 and N41. The Zn(2+) site is built by K99, H136, and H174. K99 is modified (N6-carboxylysine). Residue H136 coordinates substrate. Position 219 (L219) interacts with substrate. D247 contributes to the Zn(2+) binding site. Residue D247 is part of the active site. Residues H251 and A263 each coordinate substrate.

It belongs to the metallo-dependent hydrolases superfamily. DHOase family. Class II DHOase subfamily. In terms of assembly, homodimer. It depends on Zn(2+) as a cofactor.

The enzyme catalyses (S)-dihydroorotate + H2O = N-carbamoyl-L-aspartate + H(+). Its pathway is pyrimidine metabolism; UMP biosynthesis via de novo pathway; (S)-dihydroorotate from bicarbonate: step 3/3. Functionally, catalyzes the reversible cyclization of carbamoyl aspartate to dihydroorotate. The protein is Dihydroorotase of Microcystis aeruginosa (strain NIES-843 / IAM M-2473).